Reading from the N-terminus, the 323-residue chain is Lipoyl synthase (323 aa).

7 residues coordinate [4Fe-4S] cluster: Cys69, Cys74, Cys80, Cys95, Cys99, Cys102, and Ser310. The Radical SAM core domain maps to Trp81 to Arg299.

It belongs to the radical SAM superfamily. Lipoyl synthase family. It depends on [4Fe-4S] cluster as a cofactor.

Its subcellular location is the cytoplasm. It carries out the reaction [[Fe-S] cluster scaffold protein carrying a second [4Fe-4S](2+) cluster] + N(6)-octanoyl-L-lysyl-[protein] + 2 oxidized [2Fe-2S]-[ferredoxin] + 2 S-adenosyl-L-methionine + 4 H(+) = [[Fe-S] cluster scaffold protein] + N(6)-[(R)-dihydrolipoyl]-L-lysyl-[protein] + 4 Fe(3+) + 2 hydrogen sulfide + 2 5'-deoxyadenosine + 2 L-methionine + 2 reduced [2Fe-2S]-[ferredoxin]. It participates in protein modification; protein lipoylation via endogenous pathway; protein N(6)-(lipoyl)lysine from octanoyl-[acyl-carrier-protein]: step 2/2. Functionally, catalyzes the radical-mediated insertion of two sulfur atoms into the C-6 and C-8 positions of the octanoyl moiety bound to the lipoyl domains of lipoate-dependent enzymes, thereby converting the octanoylated domains into lipoylated derivatives. In Thermus thermophilus (strain ATCC 27634 / DSM 579 / HB8), this protein is Lipoyl synthase.